The following is a 279-amino-acid chain: Energy-coupling factor transporter ATP-binding protein EcfA1 (279 aa).

In terms of domain architecture, ABC transporter spans 5-240 (IELKKVTFNY…GDELLQLGLD (236 aa)). Residue 40–47 (GHNGSGKS) coordinates ATP.

This sequence belongs to the ABC transporter superfamily. Energy-coupling factor EcfA family. In terms of assembly, forms a stable energy-coupling factor (ECF) transporter complex composed of 2 membrane-embedded substrate-binding proteins (S component), 2 ATP-binding proteins (A component) and 2 transmembrane proteins (T component).

It is found in the cell membrane. Its function is as follows. ATP-binding (A) component of a common energy-coupling factor (ECF) ABC-transporter complex. Unlike classic ABC transporters this ECF transporter provides the energy necessary to transport a number of different substrates. The protein is Energy-coupling factor transporter ATP-binding protein EcfA1 of Streptococcus pyogenes serotype M12 (strain MGAS2096).